The chain runs to 588 residues: Sperm-associated microtubule inner protein 4 (588 aa).

Threonine 219 is subject to Phosphothreonine. Phosphoserine is present on residues serine 406, serine 421, and serine 427. Tyrosine 441 carries the post-translational modification Phosphotyrosine. Residues serine 457, serine 484, and serine 516 each carry the phosphoserine modification.

As to expression, predominantly expressed in the testes.

Its subcellular location is the cytoplasm. The protein localises to the cytoskeleton. It is found in the microtubule organizing center. The protein resides in the centrosome. It localises to the flagellum axoneme. Microtubule inner protein (MIP) part of the dynein-decorated doublet microtubules (DMTs) in flagellum axoneme. May serve to reinforce and thus stabilize the microtubule structure in the sperm flagella. The protein is Sperm-associated microtubule inner protein 4 (Spmip4) of Mus musculus (Mouse).